The primary structure comprises 271 residues: L-aspartate dehydrogenase (271 aa).

Ala124 and Asn192 together coordinate NAD(+). The active site involves His222.

The protein belongs to the L-aspartate dehydrogenase family.

It catalyses the reaction L-aspartate + NADP(+) + H2O = oxaloacetate + NH4(+) + NADPH + H(+). The enzyme catalyses L-aspartate + NAD(+) + H2O = oxaloacetate + NH4(+) + NADH + H(+). It participates in cofactor biosynthesis; NAD(+) biosynthesis; iminoaspartate from L-aspartate (dehydrogenase route): step 1/1. Its function is as follows. Specifically catalyzes the NAD or NADP-dependent dehydrogenation of L-aspartate to iminoaspartate. This Methanosarcina acetivorans (strain ATCC 35395 / DSM 2834 / JCM 12185 / C2A) protein is L-aspartate dehydrogenase.